A 76-amino-acid chain; its full sequence is Peptide ARACIN 1 (76 aa).

An N-terminal signal peptide occupies residues 1–22; that stretch reads MAMKTSHVLLLCLMFVIGFVEA. Residues 23–35 constitute a propeptide, removed in mature form; that stretch reads RRSDTGPDISTPP. A SxS motif essential for MIK2 binding motif is present at residues 36-38; it reads SGS. Residues 36–49 carry the SCOOP motif motif; sequence SGSCGASIAEFNSS. Residues 56–76 form a disordered region; it reads APPCRRPRLQNSEDVTHTTLP. Positions 64 to 76 are enriched in polar residues; that stretch reads LQNSEDVTHTTLP.

Belongs to the serine rich endogenous peptide (SCOOP) phytocytokine family. In terms of assembly, interacts with MIK2 (via extracellular leucine-rich repeat domain); this interaction triggers the formation of complex between MIK2 and the BAK1/SERK3 and SERK4 coreceptors, and subsequent BAK1 activation by phosphorylation. In terms of tissue distribution, mainly expressed in young developing leaves, hydathodes, immature flowers and elongating pollen tubes.

Its subcellular location is the cell membrane. The protein localises to the secreted. It localises to the extracellular space. It is found in the apoplast. The protein resides in the endoplasmic reticulum. Brassicaceae-specific phytocytokine (plant endogenous peptide released into the apoplast) perceived by MIK2 in a BAK1/SERK3 and SERK4 coreceptors-dependent manner, that modulates various physiological and antimicrobial processes including growth prevention and reactive oxygen species (ROS) response regulation. Inhibits the fungal growth of Alternaria brassicicola, Sclerotinia sclerotiorum, Fusarium graminearum, yeast (Saccharomyces) and Botrytis cinerea, thus being an antimicrobial peptide (AMP). Promotes resistance to A.brassicicola and B.cinerea. The polypeptide is Peptide ARACIN 1 (Arabidopsis thaliana (Mouse-ear cress)).